Here is a 37-residue protein sequence, read N- to C-terminus: L-amino-acid oxidase (37 aa).

It belongs to the flavin monoamine oxidase family. FIG1 subfamily. Homodimer; non-covalently linked. Requires FAD as cofactor. Post-translationally, N-Glycosylated. Expressed by the venom gland.

The protein resides in the secreted. It catalyses the reaction an L-alpha-amino acid + O2 + H2O = a 2-oxocarboxylate + H2O2 + NH4(+). The enzyme catalyses L-leucine + O2 + H2O = 4-methyl-2-oxopentanoate + H2O2 + NH4(+). It carries out the reaction L-phenylalanine + O2 + H2O = 3-phenylpyruvate + H2O2 + NH4(+). The catalysed reaction is L-tryptophan + O2 + H2O = indole-3-pyruvate + H2O2 + NH4(+). It catalyses the reaction L-methionine + O2 + H2O = 4-methylsulfanyl-2-oxobutanoate + H2O2 + NH4(+). The enzyme catalyses L-isoleucine + O2 + H2O = (S)-3-methyl-2-oxopentanoate + H2O2 + NH4(+). It carries out the reaction L-arginine + O2 + H2O = 5-guanidino-2-oxopentanoate + H2O2 + NH4(+). The catalysed reaction is L-histidine + O2 + H2O = 3-(imidazol-5-yl)pyruvate + H2O2 + NH4(+). It catalyses the reaction L-valine + O2 + H2O = 3-methyl-2-oxobutanoate + H2O2 + NH4(+). Catalyzes an oxidative deamination of predominantly hydrophobic and aromatic L-amino acids, thus producing hydrogen peroxide that may contribute to the diverse toxic effects of this enzyme. Is highly active on L-Leu, L-Met, moderately active on L-Arg, L-Trp, L-Phe, L-Val, L-His, and L-Ile, and is weakly or not active on L-Cys, L-Lys, L-Ala, L-Thr, L-Asp, L-Ser, and L-Pro. Exhibits diverse biological activities, such as hemorrhage, edema, apoptosis of vascular endothelial cells or tumor cell lines, as well as regulation of platelet aggregation. Effects of snake L-amino oxidases on platelets are controversial, since they either induce aggregation or inhibit agonist-induced aggregation. These different effects are probably due to different experimental conditions. This protein induce hemolysis and has antibacterial and antiparasitic activities (against the Gram-positive S.aureus). Tested in vivo, this protein significantly inhibits Ehrlich ascite tumors growth and induces an influx of polymorphonuclear cells, as well as spontaneous liberation of hydrogen peroxide from peritoneal macrophages. This Bothrops jararaca (Jararaca) protein is L-amino-acid oxidase.